A 333-amino-acid polypeptide reads, in one-letter code: tRNA N6-adenosine threonylcarbamoyltransferase (333 aa).

Residues His111 and His115 each coordinate Fe cation. Residues 134 to 138 (LVSGG), Asp167, Gly180, and Asn272 contribute to the substrate site. Asp300 contacts Fe cation.

This sequence belongs to the KAE1 / TsaD family. It depends on Fe(2+) as a cofactor.

It is found in the cytoplasm. The enzyme catalyses L-threonylcarbamoyladenylate + adenosine(37) in tRNA = N(6)-L-threonylcarbamoyladenosine(37) in tRNA + AMP + H(+). Its function is as follows. Required for the formation of a threonylcarbamoyl group on adenosine at position 37 (t(6)A37) in tRNAs that read codons beginning with adenine. Is involved in the transfer of the threonylcarbamoyl moiety of threonylcarbamoyl-AMP (TC-AMP) to the N6 group of A37, together with TsaE and TsaB. TsaD likely plays a direct catalytic role in this reaction. The protein is tRNA N6-adenosine threonylcarbamoyltransferase of Legionella pneumophila (strain Lens).